The sequence spans 176 residues: Peptidyl-tRNA hydrolase (176 aa).

Tyr-14 contributes to the tRNA binding site. Residue His-19 is the Proton acceptor of the active site. Tyr-65, Asn-67, and Asn-113 together coordinate tRNA.

It belongs to the PTH family. Monomer.

Its subcellular location is the cytoplasm. It catalyses the reaction an N-acyl-L-alpha-aminoacyl-tRNA + H2O = an N-acyl-L-amino acid + a tRNA + H(+). Hydrolyzes ribosome-free peptidyl-tRNAs (with 1 or more amino acids incorporated), which drop off the ribosome during protein synthesis, or as a result of ribosome stalling. Functionally, catalyzes the release of premature peptidyl moieties from peptidyl-tRNA molecules trapped in stalled 50S ribosomal subunits, and thus maintains levels of free tRNAs and 50S ribosomes. This Phytoplasma mali (strain AT) protein is Peptidyl-tRNA hydrolase.